A 273-amino-acid chain; its full sequence is Imidazole glycerol phosphate synthase subunit HisF (273 aa).

Active-site residues include aspartate 11 and aspartate 134.

It belongs to the HisA/HisF family. In terms of assembly, heterodimer of HisH and HisF.

It localises to the cytoplasm. It catalyses the reaction 5-[(5-phospho-1-deoxy-D-ribulos-1-ylimino)methylamino]-1-(5-phospho-beta-D-ribosyl)imidazole-4-carboxamide + L-glutamine = D-erythro-1-(imidazol-4-yl)glycerol 3-phosphate + 5-amino-1-(5-phospho-beta-D-ribosyl)imidazole-4-carboxamide + L-glutamate + H(+). Its pathway is amino-acid biosynthesis; L-histidine biosynthesis; L-histidine from 5-phospho-alpha-D-ribose 1-diphosphate: step 5/9. IGPS catalyzes the conversion of PRFAR and glutamine to IGP, AICAR and glutamate. The HisF subunit catalyzes the cyclization activity that produces IGP and AICAR from PRFAR using the ammonia provided by the HisH subunit. This chain is Imidazole glycerol phosphate synthase subunit HisF, found in Methanosarcina acetivorans (strain ATCC 35395 / DSM 2834 / JCM 12185 / C2A).